A 522-amino-acid polypeptide reads, in one-letter code: Peptide chain release factor 3 (522 aa).

The region spanning 9–276 (KKRRTFAIIS…SFVNLAPAPQ (268 aa)) is the tr-type G domain. GTP is bound by residues 18-25 (SHPDAGKT), 86-90 (DTPGH), and 140-143 (NKLD).

Belongs to the TRAFAC class translation factor GTPase superfamily. Classic translation factor GTPase family. PrfC subfamily.

The protein resides in the cytoplasm. Functionally, increases the formation of ribosomal termination complexes and stimulates activities of RF-1 and RF-2. It binds guanine nucleotides and has strong preference for UGA stop codons. It may interact directly with the ribosome. The stimulation of RF-1 and RF-2 is significantly reduced by GTP and GDP, but not by GMP. In Lactobacillus johnsonii (strain CNCM I-12250 / La1 / NCC 533), this protein is Peptide chain release factor 3.